A 473-amino-acid polypeptide reads, in one-letter code: Photosystem II CP43 reaction center protein (473 aa).

A propeptide spanning residues 1–14 is cleaved from the precursor; that stretch reads MKILYSQRRFYHVE. At T15 the chain carries N-acetylthreonine. T15 bears the Phosphothreonine mark. Transmembrane regions (helical) follow at residues 69–93, 134–155, 178–200, 255–275, and 291–312; these read LFEV…PHLA, LIGP…KDKN, KALY…RKIT, KPFA…LSYS, and WFNN…ASQA. E367 is a binding site for [CaMn4O5] cluster. The chain crosses the membrane as a helical span at residues 447–471; sequence RARAAAAGFEKGIDRDFEPVLSMTP.

It belongs to the PsbB/PsbC family. PsbC subfamily. In terms of assembly, PSII is composed of 1 copy each of membrane proteins PsbA, PsbB, PsbC, PsbD, PsbE, PsbF, PsbH, PsbI, PsbJ, PsbK, PsbL, PsbM, PsbT, PsbX, PsbY, PsbZ, Psb30/Ycf12, at least 3 peripheral proteins of the oxygen-evolving complex and a large number of cofactors. It forms dimeric complexes. The cofactor is Binds multiple chlorophylls and provides some of the ligands for the Ca-4Mn-5O cluster of the oxygen-evolving complex. It may also provide a ligand for a Cl- that is required for oxygen evolution. PSII binds additional chlorophylls, carotenoids and specific lipids..

Its subcellular location is the plastid. The protein resides in the chloroplast thylakoid membrane. Its function is as follows. One of the components of the core complex of photosystem II (PSII). It binds chlorophyll and helps catalyze the primary light-induced photochemical processes of PSII. PSII is a light-driven water:plastoquinone oxidoreductase, using light energy to abstract electrons from H(2)O, generating O(2) and a proton gradient subsequently used for ATP formation. In Physcomitrium patens (Spreading-leaved earth moss), this protein is Photosystem II CP43 reaction center protein.